The sequence spans 309 residues: Probable cell wall protein PGA50 (309 aa).

The signal sequence occupies residues 1-17 (MKLNLLLLLFIVELVAA). 5 N-linked (GlcNAc...) asparagine glycosylation sites follow: N67, N115, N248, N267, and N277. Residues 241–281 (STTTFSSNGTSSGTTNGDTRAETKSSNSTQTSSSDKNSSQI) form a disordered region. S286 carries GPI-anchor amidated serine lipidation. Positions 287 to 309 (TGVANFVASFGMGTLLLFVLSLC) are cleaved as a propeptide — removed in mature form.

The protein belongs to the IHD1 family. The GPI-anchor is attached to the protein in the endoplasmic reticulum and serves to target the protein to the cell surface. There, the glucosamine-inositol phospholipid moiety is cleaved off and the GPI-modified mannoprotein is covalently attached via its lipidless GPI glycan remnant to the 1,6-beta-glucan of the outer cell wall layer.

The protein localises to the secreted. Its subcellular location is the cell wall. It localises to the membrane. Probable GPI-anchored cell wall protein that may be involved in cell wall organization, hyphal growth, as well as in virulence. The sequence is that of Probable cell wall protein PGA50 (PGA50) from Candida albicans (strain SC5314 / ATCC MYA-2876) (Yeast).